The chain runs to 304 residues: Polyisoprenyl-teichoic acid--peptidoglycan teichoic acid transferase TagU (304 aa).

Residues 1–4 (MKKK) lie on the Cytoplasmic side of the membrane. Residues 5-25 (ILFWILGIIGIMIIGGGVYAY) form a helical; Signal-anchor for type II membrane protein membrane-spanning segment. At 26–304 (NVYSSVSKTL…KLRAHLELTK (279 aa)) the chain is on the extracellular side.

This sequence belongs to the LytR/CpsA/Psr (LCP) family.

It localises to the cell membrane. The protein operates within cell wall biogenesis. In terms of biological role, may catalyze the final step in cell wall teichoic acid biosynthesis, the transfer of the anionic cell wall polymers (APs) from their lipid-linked precursor to the cell wall peptidoglycan (PG). This Bacillus mycoides (strain KBAB4) (Bacillus weihenstephanensis) protein is Polyisoprenyl-teichoic acid--peptidoglycan teichoic acid transferase TagU.